A 269-amino-acid polypeptide reads, in one-letter code: MTEGKSSDKPAKRLLALNPKEDAEFQKKVQQVKKRPQTGQTLSPGVLYVGHLPRGLFEPQLKSYFEQFGKVLRLRVSRSKKTGGSKGYGFVEFECDEVAKIVAETMNNYLMGERIIKCHVIPPEKVHEKLFVGSIAGFKKPKYPAVTRYNKTHTEDDVKKVGTKLLSKESKLRKRLAAKGIDYDFPGFAAQIPAKKAPSEANVSVCSEDVTPVCTPSLLERRKSLRVEDDDVDDEIVIKVKPLPENSDDVEESEEESAEEDEGEEEEAA.

The region spanning 45 to 123 (GVLYVGHLPR…RIIKCHVIPP (79 aa)) is the RRM domain. Residues 234-269 (DEIVIKVKPLPENSDDVEESEEESAEEDEGEEEEAA) form a disordered region. Residues 246-269 (NSDDVEESEEESAEEDEGEEEEAA) are compositionally biased toward acidic residues.

It is found in the nucleus. The protein localises to the nucleolus. Functionally, plays an essential role in early embryonic development. The chain is MKI67 FHA domain-interacting nucleolar phosphoprotein (nifk) from Danio rerio (Zebrafish).